The chain runs to 74 residues: Anionic peptide clone 10 (74 aa).

The signal sequence occupies residues 1–24 (MVSKSLIVLLLVSVLVSTFFTTEA).

The protein belongs to the non-disulfide-bridged peptide (NDBP) superfamily. Long chain multifunctional peptide (group 2) family. Expressed by the venom gland.

It localises to the secreted. In terms of biological role, may be an antimicrobial peptide. This chain is Anionic peptide clone 10, found in Tityus costatus (Brazilian scorpion).